The following is a 471-amino-acid chain: MAKAPVLTPRADDFPRWYQDLINKAELADNGPVRGTMVIRPYGYGLWERMQQEMDARIKETGTQNAYFPLLIPQSYLTKEADHVEGFAPELAVVTHGGGKELEEPAVVRPTSEMIINDYFSKWVQSYRDLPLLINQWANVVRWELRPRLFLRTTEFLWQEGHTAHATYEEARDFAAHIHRHVYADFMENVLAMDVVLGRKTAKERFAGAVNTLTLEGMMGDGKALQMGTSHELGQNFARAFHTQYLSKEGKQELVWQTSWGSTTRMIGALVMMHGDDNGLRVPPRLAQTQVVVLAIKGDEAVLAKVRETGDRLKAAGLRVQVDDRTDVPFGRRAVDWELKGVPVRVEVGPRDLENGTAMVARRIPGGKEPVALDALAALLPTALEEDQALLLRQARERRASRTSDVSTIEEAVEAAAGGGWARIPWATLGERGEAELAEHAASVRCLVAEDGSVPGADDAPGNVAVVARAY.

This sequence belongs to the class-II aminoacyl-tRNA synthetase family. ProS type 3 subfamily. In terms of assembly, homodimer.

The protein localises to the cytoplasm. It carries out the reaction tRNA(Pro) + L-proline + ATP = L-prolyl-tRNA(Pro) + AMP + diphosphate. Functionally, catalyzes the attachment of proline to tRNA(Pro) in a two-step reaction: proline is first activated by ATP to form Pro-AMP and then transferred to the acceptor end of tRNA(Pro). This chain is Proline--tRNA ligase 2, found in Streptomyces avermitilis (strain ATCC 31267 / DSM 46492 / JCM 5070 / NBRC 14893 / NCIMB 12804 / NRRL 8165 / MA-4680).